A 680-amino-acid polypeptide reads, in one-letter code: tRNA 5-methylaminomethyl-2-thiouridine biosynthesis bifunctional protein MnmC (680 aa).

A tRNA (mnm(5)s(2)U34)-methyltransferase region spans residues 1–251; sequence MSQNHILPQN…KREMIAGTLT (251 aa). An FAD-dependent cmnm(5)s(2)U34 oxidoreductase region spans residues 277-680; sequence IGGGVASAAL…RLLKGKPLDI (404 aa).

It in the N-terminal section; belongs to the methyltransferase superfamily. tRNA (mnm(5)s(2)U34)-methyltransferase family. In the C-terminal section; belongs to the DAO family. The cofactor is FAD.

Its subcellular location is the cytoplasm. It catalyses the reaction 5-aminomethyl-2-thiouridine(34) in tRNA + S-adenosyl-L-methionine = 5-methylaminomethyl-2-thiouridine(34) in tRNA + S-adenosyl-L-homocysteine + H(+). In terms of biological role, catalyzes the last two steps in the biosynthesis of 5-methylaminomethyl-2-thiouridine (mnm(5)s(2)U) at the wobble position (U34) in tRNA. Catalyzes the FAD-dependent demodification of cmnm(5)s(2)U34 to nm(5)s(2)U34, followed by the transfer of a methyl group from S-adenosyl-L-methionine to nm(5)s(2)U34, to form mnm(5)s(2)U34. The polypeptide is tRNA 5-methylaminomethyl-2-thiouridine biosynthesis bifunctional protein MnmC (Aliivibrio fischeri (strain ATCC 700601 / ES114) (Vibrio fischeri)).